A 545-amino-acid polypeptide reads, in one-letter code: CTP synthase (545 aa).

The tract at residues 1–266 is amidoligase domain; sequence MTHFIFVTGG…DDLICERFGY (266 aa). Serine 13 lines the CTP pocket. Residue serine 13 coordinates UTP. Residues 14 to 19 and aspartate 71 each bind ATP; that span reads SLGKGI. Mg(2+)-binding residues include aspartate 71 and glutamate 140. CTP contacts are provided by residues 147 to 149, 187 to 192, and lysine 223; these read DIE and KTKPTQ. UTP contacts are provided by residues 187-192 and lysine 223; that span reads KTKPTQ. Position 239–241 (239–241) interacts with ATP; sequence KDA. A Glutamine amidotransferase type-1 domain is found at 292 to 543; sequence RVAMVGKYVE…IDAAKKQHLK (252 aa). Glycine 353 is a binding site for L-glutamine. The active-site Nucleophile; for glutamine hydrolysis is the cysteine 380. L-glutamine-binding positions include 381–384, glutamate 404, and arginine 471; that span reads LGMQ. Catalysis depends on residues histidine 516 and glutamate 518.

The protein belongs to the CTP synthase family. As to quaternary structure, homotetramer.

It catalyses the reaction UTP + L-glutamine + ATP + H2O = CTP + L-glutamate + ADP + phosphate + 2 H(+). The catalysed reaction is L-glutamine + H2O = L-glutamate + NH4(+). It carries out the reaction UTP + NH4(+) + ATP = CTP + ADP + phosphate + 2 H(+). It participates in pyrimidine metabolism; CTP biosynthesis via de novo pathway; CTP from UDP: step 2/2. Allosterically activated by GTP, when glutamine is the substrate; GTP has no effect on the reaction when ammonia is the substrate. The allosteric effector GTP functions by stabilizing the protein conformation that binds the tetrahedral intermediate(s) formed during glutamine hydrolysis. Inhibited by the product CTP, via allosteric rather than competitive inhibition. Functionally, catalyzes the ATP-dependent amination of UTP to CTP with either L-glutamine or ammonia as the source of nitrogen. Regulates intracellular CTP levels through interactions with the four ribonucleotide triphosphates. This Acinetobacter baylyi (strain ATCC 33305 / BD413 / ADP1) protein is CTP synthase.